A 742-amino-acid polypeptide reads, in one-letter code: Hapless 2 (742 aa).

An N-terminal signal peptide occupies residues 1-19; that stretch reads MKFLAFGLIYFHFCILNRC. At 20–540 the chain is on the extracellular side; sequence EYITSSTIQK…CYFSAGCIKE (521 aa). 7 cysteine pairs are disulfide-bonded: Cys-30-Cys-40, Cys-118-Cys-147, Cys-129-Cys-182, Cys-148-Cys-312, Cys-150-Cys-168, Cys-295-Cys-319, and Cys-431-Cys-470. Residues 152 to 179 form an important for membrane fusion region; sequence LSDILGMGNDLSRGKVCYALNLGAGSAT. Residues 541 to 561 form a helical membrane-spanning segment; that stretch reads AFKSIASIAGVASALALVIFL. At 562–742 the chain is on the cytoplasmic side; sequence AKNGYLVPII…STSPLYLLIE (181 aa).

The protein belongs to the HAP2/GCS1 family.

It is found in the cell membrane. The protein resides in the cell junction. Its function is as follows. During fertilization, required for the formation of intercellular membrane pores and subsequent exchange of gametic pronuclei between cells. Probably initiates the formation of intercellular membrane pores by inserting part of its extracellular domain into the cell membrane of the adjoining cell in the mating pair. Mating requires the presence of HAP2 on at least one of the two cells. Mating efficiency is high when HAP2 is present on both cells, and is strongly reduced when HAP2 is present on only one of the two cells. In Tetrahymena thermophila, this protein is Hapless 2.